The following is a 220-amino-acid chain: NADH-quinone oxidoreductase subunit I (220 aa).

2 consecutive 4Fe-4S ferredoxin-type domains span residues 71 to 102 and 112 to 141; these read LQRL…IITH and DSYT…MGNR. [4Fe-4S] cluster contacts are provided by cysteine 82, cysteine 85, cysteine 88, cysteine 92, cysteine 121, cysteine 124, cysteine 127, and cysteine 131. The disordered stretch occupies residues 187 to 220; it reads MQATPLDYVQEPSKEESKEETPTRSESHKGDENV. Positions 198 to 220 are enriched in basic and acidic residues; it reads PSKEESKEETPTRSESHKGDENV.

The protein belongs to the complex I 23 kDa subunit family. NDH-1 is composed of 14 different subunits. Subunits NuoA, H, J, K, L, M, N constitute the membrane sector of the complex. Requires [4Fe-4S] cluster as cofactor.

The protein localises to the cell inner membrane. It carries out the reaction a quinone + NADH + 5 H(+)(in) = a quinol + NAD(+) + 4 H(+)(out). Its function is as follows. NDH-1 shuttles electrons from NADH, via FMN and iron-sulfur (Fe-S) centers, to quinones in the respiratory chain. The immediate electron acceptor for the enzyme in this species is believed to be ubiquinone. Couples the redox reaction to proton translocation (for every two electrons transferred, four hydrogen ions are translocated across the cytoplasmic membrane), and thus conserves the redox energy in a proton gradient. In Helicobacter pylori (strain G27), this protein is NADH-quinone oxidoreductase subunit I.